The primary structure comprises 447 residues: Pentatricopeptide repeat-containing protein At3g53170 (447 aa).

10 PPR repeats span residues 93–127, 128–158, 164–198, 199–233, 235–269, 270–304, 305–339, 340–374, 375–409, and 410–444; these read RCKTYTKLFKVLGNCKQPDQASLLFEVMLSEGLKP, TIDVYTSLISVYGKSELLDKAFSTLEYMKSV, DVFTFTVLISCCCKLGRFDLVKSIVLEMSYLGVGC, STVTYNTIIDGYGKAGMFEEMESVLADMIEDGDSL, DVCTLNSIIGSYGNGRNMRKMESWYSRFQLMGVQP, DITTFNILILSFGKAGMYKKMCSVMDFMEKRFFSL, TTVTYNIVIETFGKAGRIEKMDDVFRKMKYQGVKP, NSITYCSLVNAYSKAGLVVKIDSVLRQIVNSDVVL, DTPFFNCIINAYGQAGDLATMKELYIQMEERKCKP, and DKITFATMIKTYTAHGIFDAVQELEKQMISSGENL.

The protein belongs to the PPR family. P subfamily.

The chain is Pentatricopeptide repeat-containing protein At3g53170 from Arabidopsis thaliana (Mouse-ear cress).